Here is a 258-residue protein sequence, read N- to C-terminus: Small ribosomal subunit protein uS3 (258 aa).

In terms of domain architecture, KH type-2 spans 16 to 85 (IDEYLEKELE…NPQVEVKEVD (70 aa)). Positions 198–258 (RVTETPAEEA…KDADGEESEK (61 aa)) are disordered. Positions 203–245 (PAEEASEASEVVEDLEEVEDLEEIEDLEEVEDLEEVEDLEDTE) are enriched in acidic residues.

The protein belongs to the universal ribosomal protein uS3 family. Part of the 30S ribosomal subunit.

In terms of biological role, binds the lower part of the 30S subunit head. The polypeptide is Small ribosomal subunit protein uS3 (Methanothermobacter thermautotrophicus (strain ATCC 29096 / DSM 1053 / JCM 10044 / NBRC 100330 / Delta H) (Methanobacterium thermoautotrophicum)).